Consider the following 909-residue polypeptide: DNA mismatch repair protein MutS (909 aa).

An ATP-binding site is contributed by 614-621 (GPNMAGKS). Positions 798–827 (LEENSPQNNDISKESSSSSNSHDKLESSVI) are disordered. Residues 818 to 827 (SHDKLESSVI) are compositionally biased toward basic and acidic residues.

This sequence belongs to the DNA mismatch repair MutS family.

Its function is as follows. This protein is involved in the repair of mismatches in DNA. It is possible that it carries out the mismatch recognition step. This protein has a weak ATPase activity. This chain is DNA mismatch repair protein MutS, found in Clostridium novyi (strain NT).